The chain runs to 354 residues: MSLESVRYSRGSLQVLNQLLLPHKSEYEPVTGVQQGADAIRTMKVRGAPAIAIVGVLSLAVELTSRTCQDVPSFIAFVQESLCHLVDARPTAVNMKKAADELNAFLAKEAEKAGATTQGLAESVIQWAEALLKKDVEDNQMIGDFGAKHILETAGPTEKVCMLTHCNTGSLATAGYGTALGVVRSLHVLGRLSHVFCTETRPYNQGSRLTAYELVYEKIPATLITDSMASAAIRDRKVTAVVVGADRVVANGDTANKIGTYQLAITARYHGIPFYVAAPSTSCDLSLPTGGSIVIEERPSHELTDINGVRIAAPGIGVWNPAFDVTPHELITGIITERGVFKPEELRDGLTKGQ.

Asp246 serves as the catalytic Proton donor.

It belongs to the eIF-2B alpha/beta/delta subunits family. MtnA subfamily.

The protein localises to the cytoplasm. Its subcellular location is the nucleus. It carries out the reaction 5-(methylsulfanyl)-alpha-D-ribose 1-phosphate = 5-(methylsulfanyl)-D-ribulose 1-phosphate. The protein operates within amino-acid biosynthesis; L-methionine biosynthesis via salvage pathway; L-methionine from S-methyl-5-thio-alpha-D-ribose 1-phosphate: step 1/6. Its function is as follows. Catalyzes the interconversion of methylthioribose-1-phosphate (MTR-1-P) into methylthioribulose-1-phosphate (MTRu-1-P). The protein is Methylthioribose-1-phosphate isomerase (mri1) of Xenopus tropicalis (Western clawed frog).